A 386-amino-acid chain; its full sequence is Chaperone protein DnaJ (386 aa).

Residues 6 to 70 (DYYEVLGVDK…QKRAAYDQYG (65 aa)) enclose the J domain. The CR-type zinc-finger motif lies at 141-223 (GKDTEVSYKR…CHGTGHEKKT (83 aa)). Zn(2+) is bound by residues Cys154, Cys157, Cys171, Cys174, Cys197, Cys200, Cys211, and Cys214. 4 CXXCXGXG motif repeats span residues 154–161 (CHTCGGNG), 171–178 (CHKCKGSG), 197–204 (CDVCHGTG), and 211–218 (CETCHGTG). The interval 363–386 (LTGQSTEEQQSEGFFDKMKDAFKK) is disordered. Residues 364–374 (TGQSTEEQQSE) are compositionally biased toward polar residues. Residues 376–386 (FFDKMKDAFKK) show a composition bias toward basic and acidic residues.

This sequence belongs to the DnaJ family. In terms of assembly, homodimer. Zn(2+) serves as cofactor.

It localises to the cytoplasm. Participates actively in the response to hyperosmotic and heat shock by preventing the aggregation of stress-denatured proteins and by disaggregating proteins, also in an autonomous, DnaK-independent fashion. Unfolded proteins bind initially to DnaJ; upon interaction with the DnaJ-bound protein, DnaK hydrolyzes its bound ATP, resulting in the formation of a stable complex. GrpE releases ADP from DnaK; ATP binding to DnaK triggers the release of the substrate protein, thus completing the reaction cycle. Several rounds of ATP-dependent interactions between DnaJ, DnaK and GrpE are required for fully efficient folding. Also involved, together with DnaK and GrpE, in the DNA replication of plasmids through activation of initiation proteins. The polypeptide is Chaperone protein DnaJ (Tetragenococcus halophilus (Pediococcus halophilus)).